A 510-amino-acid chain; its full sequence is NAD(P)H-quinone oxidoreductase subunit 2, chloroplastic (510 aa).

Helical transmembrane passes span 24–44, 59–79, 99–119, 124–144, 149–169, 183–203, 229–249, 295–315, 323–343, 347–367, 395–415, 418–438, and 484–504; these read LLLF…GLIL, WFYF…LFRW, IFQF…VEYI, MAIT…MFLC, XITI…LSGY, YLLM…WLYG, ISIA…PAPF, WHLL…LIAI, MLAY…IVGD, GYAS…GTFA, ALSS…AGFF, LHLF…IGLL, and MTVC…ILAI.

The protein belongs to the complex I subunit 2 family. NDH is composed of at least 16 different subunits, 5 of which are encoded in the nucleus.

Its subcellular location is the plastid. It localises to the chloroplast thylakoid membrane. The enzyme catalyses a plastoquinone + NADH + (n+1) H(+)(in) = a plastoquinol + NAD(+) + n H(+)(out). The catalysed reaction is a plastoquinone + NADPH + (n+1) H(+)(in) = a plastoquinol + NADP(+) + n H(+)(out). NDH shuttles electrons from NAD(P)H:plastoquinone, via FMN and iron-sulfur (Fe-S) centers, to quinones in the photosynthetic chain and possibly in a chloroplast respiratory chain. The immediate electron acceptor for the enzyme in this species is believed to be plastoquinone. Couples the redox reaction to proton translocation, and thus conserves the redox energy in a proton gradient. The protein is NAD(P)H-quinone oxidoreductase subunit 2, chloroplastic of Narcissus elegans (Daffodil).